Here is a 94-residue protein sequence, read N- to C-terminus: MLKPLGNRVIIKRVESEQTTKSGIVLTEKAKEKSNEGKVIAVGPGRLLDNGERVTPEVKEGDTVVFEQYAGSEVQVGEDKYLVISEEEVLAIVQ.

It belongs to the GroES chaperonin family. Heptamer of 7 subunits arranged in a ring. Interacts with the chaperonin GroEL.

The protein localises to the cytoplasm. Its function is as follows. Together with the chaperonin GroEL, plays an essential role in assisting protein folding. The GroEL-GroES system forms a nano-cage that allows encapsulation of the non-native substrate proteins and provides a physical environment optimized to promote and accelerate protein folding. GroES binds to the apical surface of the GroEL ring, thereby capping the opening of the GroEL channel. This is Co-chaperonin GroES from Staphylococcus carnosus (strain TM300).